Consider the following 334-residue polypeptide: N-acetylmuramate/N-acetylglucosamine kinase (334 aa).

This sequence belongs to the kinase AmgK family.

It carries out the reaction N-acetyl-D-muramate + ATP = N-acetyl-alpha-D-muramate 1-phosphate + ADP + H(+). It catalyses the reaction N-acetyl-D-glucosamine + ATP = N-acetyl-alpha-D-glucosamine 1-phosphate + ADP + H(+). It functions in the pathway cell wall biogenesis; peptidoglycan recycling. Its function is as follows. Sugar kinase that catalyzes the ATP-dependent phosphorylation of N-acetylmuramate (MurNAc) and N-acetylglucosamine (GlcNAc) at its C1 hydroxyl group, leading to MurNAc alpha-1P and GlcNAc alpha-1P, respectively. Is likely involved in peptidoglycan recycling as part of a cell wall recycling pathway that bypasses de novo biosynthesis of the peptidoglycan precursor UDP-MurNAc. Is able to complement the fosfomycin sensitivity phenotype of a P.putida mutant lacking amgK. This Neisseria meningitidis serogroup B (strain ATCC BAA-335 / MC58) protein is N-acetylmuramate/N-acetylglucosamine kinase.